A 558-amino-acid chain; its full sequence is NAD-dependent malic enzyme 2 (558 aa).

Y101 serves as the catalytic Proton donor. NAD(+) is bound at residue R154. Residue K172 is the Proton acceptor of the active site. 3 residues coordinate a divalent metal cation: E243, D244, and D267. D267 and N411 together coordinate NAD(+).

Belongs to the malic enzymes family. In terms of assembly, homotetramer. It depends on Mg(2+) as a cofactor. The cofactor is Mn(2+).

The enzyme catalyses (S)-malate + NAD(+) = pyruvate + CO2 + NADH. It catalyses the reaction oxaloacetate + H(+) = pyruvate + CO2. This Photobacterium profundum (strain SS9) protein is NAD-dependent malic enzyme 2.